A 409-amino-acid polypeptide reads, in one-letter code: O-methyltransferase pyiA (409 aa).

A compositionally biased stretch (polar residues) spans 1–21 (MASQDGTTELLSQSVNSTCIP). Residues 1 to 46 (MASQDGTTELLSQSVNSTCIPGSTYHVDRGRASSASTPPTSPPLSE) are disordered. Asp-271 provides a ligand contact to S-adenosyl-L-methionine. His-317 acts as the Proton acceptor in catalysis.

It belongs to the class I-like SAM-binding methyltransferase superfamily. Cation-independent O-methyltransferase family.

It functions in the pathway mycotoxin biosynthesis. Functionally, O-methyltransferase; part of the gene cluster that mediates the biosynthesis of the mycotoxin pyrichalasin H, a tyrosine-derived cytochalasan that inhibits the growth of rice seedlings, but also inhibits lymphocyte capping and actin polymerization and alters cell morphology. Pyrichalasin H is indicated as the responsible agent for the genus-specific pathogenicity of M.grisea toward crabgrass. The first step in the pathway is catalyzed by the O-methyltransferase pyiA which methylates free tyrosine to generate the precursor O-methyltyrosine. The hybrid PKS-NRPS pyiS, assisted by the enoyl reductase pyiC, are responsible for fusion of the O-methyltyrosine precursor and the polyketide backbone. The polyketide synthase module (PKS) of pyiS is responsible for the synthesis of the polyketide backbone and the downstream nonribosomal peptide synthetase (NRPS) amidates the carboxyl end of the polyketide with the O-methyltyrosine precursor. As the NRPS A-domain demonstrates substrate tolerance, pyiS can also use phenylalanine, tyrosine and even para-chlorophenylalanine as amino acid precursor, which leads to the production of novel cytochalasans, including halogenated cytochalasans. Because pyiS lacks a designated enoylreductase (ER) domain, the required activity is provided the enoyl reductase pyiC. Reduction by the hydrolyase pyiE leads to 1,5-dihydropyrrolone, which is substrate for dehydration and intra-molecular Diels-Alder cyclization by the Diels-Alderase pyiF to yield the required isoindolone-fused macrocycle. The tailoring cytochrome P450 monooxygenases piyD and piyG catalyze the hydroxylation at C-18 and C-7, respectivily, whereas the short-chain dehydrogenase/reductase pyiH reduces the carbonyl at C-21 in preparation for the transfer of an acetyl group by the acetyltransferase pyiB. These 3 reactions whose order is not clear yet, lead to the production of O-methylpyrichalasin J, a deacetylated pyrichalasin H. Finally, pyiB to converts O-methylpyrichalasin J into the final product pyrichalasin H via acetylation of C-21. This is O-methyltransferase pyiA from Pyricularia grisea (Crabgrass-specific blast fungus).